The primary structure comprises 536 residues: Carboxypeptidase Y homolog A (536 aa).

The signal sequence occupies residues 1 to 17 (MKFFTTGLLATAALAAA). Residues 18 to 124 (QEQQVLQAED…KLHNYDLRVK (107 aa)) constitute a propeptide that is removed on maturation. Cystine bridges form between cysteine 172-cysteine 412, cysteine 306-cysteine 320, cysteine 330-cysteine 353, cysteine 337-cysteine 346, and cysteine 375-cysteine 382. Asparagine 203 carries N-linked (GlcNAc...) asparagine glycosylation. Serine 259 is a catalytic residue. Residue aspartate 451 is part of the active site. Asparagine 502 is a glycosylation site (N-linked (GlcNAc...) asparagine). Histidine 513 is an active-site residue.

Belongs to the peptidase S10 family.

It is found in the vacuole. The catalysed reaction is Release of a C-terminal amino acid with broad specificity.. Functionally, vacuolar carboxypeptidase involved in degradation of small peptides. Digests preferentially peptides containing an aliphatic or hydrophobic residue in P1' position, as well as methionine, leucine or phenylalanine in P1 position of ester substrate. This chain is Carboxypeptidase Y homolog A (cpyA), found in Trichophyton rubrum (Athlete's foot fungus).